Here is a 103-residue protein sequence, read N- to C-terminus: Large ribosomal subunit protein uL24 (103 aa).

It belongs to the universal ribosomal protein uL24 family. In terms of assembly, part of the 50S ribosomal subunit.

In terms of biological role, one of two assembly initiator proteins, it binds directly to the 5'-end of the 23S rRNA, where it nucleates assembly of the 50S subunit. Functionally, one of the proteins that surrounds the polypeptide exit tunnel on the outside of the subunit. This chain is Large ribosomal subunit protein uL24, found in Roseobacter denitrificans (strain ATCC 33942 / OCh 114) (Erythrobacter sp. (strain OCh 114)).